The primary structure comprises 227 residues: Orotate phosphoribosyltransferase (227 aa).

Lys34 is a 5-phospho-alpha-D-ribose 1-diphosphate binding site. 42-43 (FF) is an orotate binding site. 5-phospho-alpha-D-ribose 1-diphosphate is bound by residues 80–81 (YK), Arg106, Lys107, Lys110, His112, and 131–139 (DDVISAGTS). Orotate-binding residues include Ser135 and Arg163.

Belongs to the purine/pyrimidine phosphoribosyltransferase family. PyrE subfamily. As to quaternary structure, homodimer. The cofactor is Mg(2+).

The enzyme catalyses orotidine 5'-phosphate + diphosphate = orotate + 5-phospho-alpha-D-ribose 1-diphosphate. Its pathway is pyrimidine metabolism; UMP biosynthesis via de novo pathway; UMP from orotate: step 1/2. In terms of biological role, catalyzes the transfer of a ribosyl phosphate group from 5-phosphoribose 1-diphosphate to orotate, leading to the formation of orotidine monophosphate (OMP). The polypeptide is Orotate phosphoribosyltransferase (Cupriavidus necator (strain ATCC 17699 / DSM 428 / KCTC 22496 / NCIMB 10442 / H16 / Stanier 337) (Ralstonia eutropha)).